The following is a 171-amino-acid chain: MERAIPGNDTREPAYGERWNGGPGGSTSPFQLPDESPSWTEWRLHYDETNSNQDNPLGFKESWGFGKVVFKRYLRYDGTETSLHRVLGSWTGDSVNYAASRFFGFDQIGCTYSIRFRGVSVTISGGSRTLQHLSEMAIRSKQELLQLTPVQVESDVSRGRPECQTFKEESE.

Residues 1 to 15 (MERAIPGNDTREPAY) are compositionally biased toward basic and acidic residues. Positions 1-32 (MERAIPGNDTREPAYGERWNGGPGGSTSPFQL) are disordered.

It belongs to the tombusvirus protein p19 family. As to quaternary structure, homodimer.

In terms of biological role, viral suppressor of RNA silencing which binds specifically to silencing RNAs (siRNAs). Acts as a molecular caliper to specifically select siRNAs based on the length of the duplex region of the RNA. In Capsicum annuum (Capsicum pepper), this protein is RNA silencing suppressor p19.